A 360-amino-acid polypeptide reads, in one-letter code: tRNA/tmRNA (uracil-C(5))-methyltransferase (360 aa).

Residues Q185, Y213, N218, E234, and D294 each coordinate S-adenosyl-L-methionine. The Nucleophile role is filled by C319. E353 functions as the Proton acceptor in the catalytic mechanism.

This sequence belongs to the class I-like SAM-binding methyltransferase superfamily. RNA M5U methyltransferase family. TrmA subfamily.

It carries out the reaction uridine(54) in tRNA + S-adenosyl-L-methionine = 5-methyluridine(54) in tRNA + S-adenosyl-L-homocysteine + H(+). The catalysed reaction is uridine(341) in tmRNA + S-adenosyl-L-methionine = 5-methyluridine(341) in tmRNA + S-adenosyl-L-homocysteine + H(+). Dual-specificity methyltransferase that catalyzes the formation of 5-methyluridine at position 54 (m5U54) in all tRNAs, and that of position 341 (m5U341) in tmRNA (transfer-mRNA). This is tRNA/tmRNA (uracil-C(5))-methyltransferase from Nitratiruptor sp. (strain SB155-2).